The primary structure comprises 279 residues: Ribosomal RNA small subunit methyltransferase A (279 aa).

Residues His10, Leu12, Gly37, Glu58, Asp83, and Asn108 each contribute to the S-adenosyl-L-methionine site.

The protein belongs to the class I-like SAM-binding methyltransferase superfamily. rRNA adenine N(6)-methyltransferase family. RsmA subfamily.

The protein localises to the cytoplasm. It carries out the reaction adenosine(1518)/adenosine(1519) in 16S rRNA + 4 S-adenosyl-L-methionine = N(6)-dimethyladenosine(1518)/N(6)-dimethyladenosine(1519) in 16S rRNA + 4 S-adenosyl-L-homocysteine + 4 H(+). Functionally, specifically dimethylates two adjacent adenosines (A1518 and A1519) in the loop of a conserved hairpin near the 3'-end of 16S rRNA in the 30S particle. May play a critical role in biogenesis of 30S subunits. This Synechococcus elongatus (strain ATCC 33912 / PCC 7942 / FACHB-805) (Anacystis nidulans R2) protein is Ribosomal RNA small subunit methyltransferase A.